Reading from the N-terminus, the 263-residue chain is Syntaxin pep12 (263 aa).

A disordered region spans residues 140–159 (RNVSLSNNSSGQRQPLTESK). A compositionally biased stretch (polar residues) spans 142 to 159 (VSLSNNSSGQRQPLTESK). 2 positions are modified to phosphoserine: S148 and S163. Residues 169 to 231 (QRLINERQGE…KNASRQLQIA (63 aa)) form the t-SNARE coiled-coil homology domain.

The protein belongs to the syntaxin family.

The protein localises to the endoplasmic reticulum. Has a role in vesicle-mediated transport but not with protein transport from Golgi to vesicle. The sequence is that of Syntaxin pep12 (pep12) from Schizosaccharomyces pombe (strain 972 / ATCC 24843) (Fission yeast).